The primary structure comprises 170 residues: Cytochrome P450 monooxygenase oryQ (170 aa).

C85 lines the heme pocket.

This sequence belongs to the cytochrome P450 family. Heme serves as cofactor.

The protein operates within secondary metabolite biosynthesis. Functionally, cytochrome P450 monooxygenase; part of the gene cluster that mediates the biosynthesis of oryzines, natural products with an unusual maleidride backbone. The two subunits of the fungal fatty acid synthase oryfasA and oryfasB probably form octenoic acid. This fatty acid is most likely activated by the acyl-CoA ligase oryP to give octenyl-CoA before the citrate synthase-like protein oryE catalyzes condensation with oxaloacetate to form tricarboxylic acid. The next steps of the pathways are conjectural, but a favorite possible route has been proposed, beginning with decarboxylation and concomitant dehydration by the decarboxylase oryM, followed by tautomerization, which may lead to the production of a diene intermediate. Reduction of this diene intermediate could give the known metabolite piliformic acid. On the pathway to oryzine B and oryzine A, however, hydroxylation of the diene by the alpha-ketoglutarate-dependent dioxygenase oryG and lactonisation by the lactonohydrolases oryH or oryL could give oryzine B directly. Finally, enoyl reduction by the dehydrogenase oryD would then convert oryzine B into oryzine A. In Aspergillus oryzae (strain ATCC 42149 / RIB 40) (Yellow koji mold), this protein is Cytochrome P450 monooxygenase oryQ.